The chain runs to 131 residues: Small ribosomal subunit protein uS8 (131 aa).

Belongs to the universal ribosomal protein uS8 family. As to quaternary structure, part of the 30S ribosomal subunit. Contacts proteins S5 and S12.

Its function is as follows. One of the primary rRNA binding proteins, it binds directly to 16S rRNA central domain where it helps coordinate assembly of the platform of the 30S subunit. This chain is Small ribosomal subunit protein uS8, found in Burkholderia lata (strain ATCC 17760 / DSM 23089 / LMG 22485 / NCIMB 9086 / R18194 / 383).